A 118-amino-acid polypeptide reads, in one-letter code: UPF0102 protein Swit_0572 (118 aa).

This sequence belongs to the UPF0102 family.

The protein is UPF0102 protein Swit_0572 of Rhizorhabdus wittichii (strain DSM 6014 / CCUG 31198 / JCM 15750 / NBRC 105917 / EY 4224 / RW1) (Sphingomonas wittichii).